Reading from the N-terminus, the 136-residue chain is Large ribosomal subunit protein bL17 (136 aa).

Belongs to the bacterial ribosomal protein bL17 family. Part of the 50S ribosomal subunit. Contacts protein L32.

The polypeptide is Large ribosomal subunit protein bL17 (Rickettsia canadensis (strain McKiel)).